The chain runs to 151 residues: Deoxyuridine 5'-triphosphate nucleotidohydrolase (151 aa).

Residues 70–72 (RSG), asparagine 83, 87–89 (LID), and methionine 97 contribute to the substrate site.

It belongs to the dUTPase family. In terms of assembly, homotrimer. Requires Mg(2+) as cofactor.

The catalysed reaction is dUTP + H2O = dUMP + diphosphate + H(+). It participates in pyrimidine metabolism; dUMP biosynthesis; dUMP from dCTP (dUTP route): step 2/2. This enzyme is involved in nucleotide metabolism: it produces dUMP, the immediate precursor of thymidine nucleotides and it decreases the intracellular concentration of dUTP so that uracil cannot be incorporated into DNA. The sequence is that of Deoxyuridine 5'-triphosphate nucleotidohydrolase from Escherichia coli O45:K1 (strain S88 / ExPEC).